The primary structure comprises 1436 residues: MGARASVLSGGKLDAWEKIRLRPGGRKKYRLKHLVWASRELERFALNPDLLETADGCQQILGQLQPALKTGTEDLQSLYNTIAVLYCVHQRIDVKDTKEALGKIEEIQNKNKQRTQQAPAAADKEKDSKISQNYPIVQNAQGQMVHQAISPRTLNAWVKVVEEKAFSPEVIPMFSALSEGATPQDLNAMLNTVGGHQAAMQMLKDTINEEAAEWDRLHPVHAGPIPPGQMREPRGSDIAGTTSTLQEQVAWMTGNPPIPVGDIYKRWIILGLNKIVRMYSPVSILDIKQGPKEPFRDYVDRFFRVLRAEQATQDVKNWMTDTLLVQNANPDCRTILKALGRGASIEEMMTACQGVGGPSHKARVLAEAMSQVTNASAAIMMQKGNFKGPRRTVKCSNCGKEGHIARNCRAPRKKGCWKCGQEGHQMKDCTGRQANFFRENLAFQQGKAREFPPEEARANSPTSRELRVRRGDHPLSEAGAERTGTSFNFPQITLWQRPIVTVKIEGQLKEALLDTGADDTVLEDINLPGKWKPKMIGGIGGFIKVRQYEQVAIEIFGKKAIGTVLVGPTPVNIIGRNILTQMGCTLNLPISPIETVPVTLKPGMDGPKVKQWPLTEEKIKALTEICLEMEKEGKISKIGPENPYNTPIFAIKKKNSTRWRKLVDFRELNKRTQDFWEVQLGIPHPAGLKKKKSVSVLDVGGAYFSVPLHEDFRKYTAFTIPSTNNETPGIRYQYNVLPQGWKGSPAIFQSSMTKILEPFRKQNPEVIIYQYMDDLYVGSDLEIGQHREKIEELRAHLLRWGFTTPDQKHQKEPPFLWMGYELHPDKWTVQPVKLPEKDSWTVNDIQKLVGKLNWASQIYPGIKVKQLCXLLRGAKALTEIVPLTKEAELELAENREILKEPVHGAYYDPSKELIAEIQKQGPDQWTYQIYQEPFKNLKTGKYAKMRSAHTNDVKQLTEVVQKIATESIVIWGKIPKFRLPIQKETWETWWTEHWQATWIPEWEFVNTPHLVKLWYQLETEPIEGAETYYVDGAANRETKMGKAGYVTDRGKQKIVSLTETTNQKTELQAIYLALQESGPEVNIVTDSQYALGIIQAQPDKSESELVNQIIEELIKKEKFYLSWVPAHKGIGGNEQVDKLVSSGIRKVLFLDGIDKAQVQHEKYHSNWRAMASDFNLPPIVAKEIVASCDKCQLKGEAMHGQVDCSPGIWQLDCTHLEGKIILVAVHVASGYIEAEVIPAETGQETAYFILKLAGRWPVKMIHTDNGSNFTSAAVKAACWWADIHQEFGIPYNPQSQGVVESMNKELKKIIGQVRDQAEHLRTAVQMAVFIHNFKRKGGIGGYSARERIIDIIATDIPTKELQKQISQIQKFRVYYRDSRDPIWKGPAKLLWKGEGAVVIQDNSEIKVVPRRKAKIIRDYGKQMAGDDCVAGRQDED.

G2 carries N-myristoyl glycine; by host lipidation. The interaction with Gp41 stretch occupies residues 7–31 (VLSGGKLDAWEKIRLRPGGRKKYRL). The segment at 8-43 (LSGGKLDAWEKIRLRPGGRKKYRLKHLVWASRELER) is interaction with host CALM1. Residues 12 to 19 (KLDAWEKI) are interaction with host AP3D1. The interaction with membrane phosphatidylinositol 4,5-bisphosphate and RNA stretch occupies residues 14–33 (DAWEKIRLRPGGRKKYRLKH). A Nuclear export signal motif is present at residues 16 to 22 (WEKIRLR). The short motif at 26 to 32 (RKKYRLK) is the Nuclear localization signal element. Residues 73–77 (EDLQS) are interaction with membrane phosphatidylinositol 4,5-bisphosphate. Residues 110 to 129 (KNKQRTQQAPAAADKEKDSK) are disordered. The residue at position 134 (Y134) is a Phosphotyrosine; by host. Residues 191–229 (NTVGGHQAAMQMLKDTINEEAAEWDRLHPVHAGPIPPGQ) form an interaction with human PPIA/CYPA and NUP153 region. The dimerization/Multimerization of capsid protein p24 stretch occupies residues 279–365 (YSPVSILDIK…GGPSHKARVL (87 aa)). 2 CCHC-type zinc fingers span residues 393–410 (VKCS…NCRA) and 414–431 (KGCW…DCTG). 2 stretches are compositionally biased toward basic and acidic residues: residues 447–457 (KAREFPPEEAR) and 464–475 (RELRVRRGDHPL). The segment at 447-482 (KAREFPPEEARANSPTSRELRVRRGDHPLSEAGAER) is disordered. Residues 490-494 (PQITL) are dimerization of protease. The Peptidase A2 domain maps to 509–578 (KEALLDTGAD…TPVNIIGRNI (70 aa)). Residue D514 is the For protease activity; shared with dimeric partner of the active site. Dimerization of protease stretches follow at residues 538-544 (GIGGFIK) and 577-589 (NILT…LNLP). The 191-residue stretch at 632–822 (EGKISKIGPE…PPFLWMGYEL (191 aa)) folds into the Reverse transcriptase domain. Mg(2+) is bound by residues D698, D773, and D774. Residues 815–823 (FLWMGYELH) are RT 'primer grip'. Positions 986–1002 (WETWWTEHWQATWIPEW) match the Tryptophan repeat motif motif. An RNase H type-1 domain is found at 1022-1145 (IEGAETYYVD…VDKLVSSGIR (124 aa)). 4 residues coordinate Mg(2+): D1031, E1066, D1086, and D1137. The segment at 1151–1192 (DGIDKAQVQHEKYHSNWRAMASDFNLPPIVAKEIVASCDKCQ) adopts an Integrase-type zinc-finger fold. Zn(2+) contacts are provided by H1160, H1164, C1188, and C1191. In terms of domain architecture, Integrase catalytic spans 1202 to 1352 (VDCSPGIWQL…SARERIIDII (151 aa)). Residues D1212, D1264, and E1300 each coordinate Mg(2+). The integrase-type DNA-binding region spans 1371-1418 (FRVYYRDSRDPIWKGPAKLLWKGEGAVVIQDNSEIKVVPRRKAKIIRD).

Homotrimer; further assembles as hexamers of trimers. Interacts with gp41 (via C-terminus). Interacts with host CALM1; this interaction induces a conformational change in the Matrix protein, triggering exposure of the myristate group. Interacts with host AP3D1; this interaction allows the polyprotein trafficking to multivesicular bodies during virus assembly. Part of the pre-integration complex (PIC) which is composed of viral genome, matrix protein, Vpr and integrase. As to quaternary structure, homodimer; the homodimer further multimerizes as homohexamers or homopentamers. Interacts with human PPIA/CYPA; This interaction stabilizes the capsid. Interacts with human NUP153. Interacts with host PDZD8; this interaction stabilizes the capsid. Interacts with monkey TRIM5; this interaction destabilizes the capsid. In terms of assembly, homodimer, whose active site consists of two apposed aspartic acid residues. Heterodimer of p66 RT and p51 RT (RT p66/p51). Heterodimerization of RT is essential for DNA polymerase activity. The overall folding of the subdomains is similar in p66 RT and p51 RT but the spatial arrangements of the subdomains are dramatically different. As to quaternary structure, homotetramer; may further associate as a homohexadecamer. Part of the pre-integration complex (PIC) which is composed of viral genome, matrix protein, Vpr and integrase. Interacts with human SMARCB1/INI1 and human PSIP1/LEDGF isoform 1. Interacts with human KPNA3; this interaction might play a role in nuclear import of the pre-integration complex. Interacts with human NUP153; this interaction might play a role in nuclear import of the pre-integration complex. Requires Mg(2+) as cofactor. In terms of processing, specific enzymatic cleavages by the viral protease yield mature proteins. The protease is released by autocatalytic cleavage. The polyprotein is cleaved during and after budding, this process is termed maturation. Proteolytic cleavage of p66 RT removes the RNase H domain to yield the p51 RT subunit. Nucleocapsid protein p7 might be further cleaved after virus entry. Tyrosine phosphorylated presumably in the virion by a host kinase. Phosphorylation is apparently not a major regulator of membrane association. Post-translationally, phosphorylated possibly by host MAPK1; this phosphorylation is necessary for Pin1-mediated virion uncoating. In terms of processing, methylated by host PRMT6, impairing its function by reducing RNA annealing and the initiation of reverse transcription.

It is found in the host cell membrane. The protein localises to the host endosome. Its subcellular location is the host multivesicular body. It localises to the virion membrane. The protein resides in the host nucleus. It is found in the host cytoplasm. The protein localises to the virion. The enzyme catalyses Specific for a P1 residue that is hydrophobic, and P1' variable, but often Pro.. It carries out the reaction Endohydrolysis of RNA in RNA/DNA hybrids. Three different cleavage modes: 1. sequence-specific internal cleavage of RNA. Human immunodeficiency virus type 1 and Moloney murine leukemia virus enzymes prefer to cleave the RNA strand one nucleotide away from the RNA-DNA junction. 2. RNA 5'-end directed cleavage 13-19 nucleotides from the RNA end. 3. DNA 3'-end directed cleavage 15-20 nucleotides away from the primer terminus.. It catalyses the reaction 3'-end directed exonucleolytic cleavage of viral RNA-DNA hybrid.. The catalysed reaction is DNA(n) + a 2'-deoxyribonucleoside 5'-triphosphate = DNA(n+1) + diphosphate. With respect to regulation, protease: The viral protease is inhibited by many synthetic protease inhibitors (PIs), such as amprenavir, atazanavir, indinavir, loprinavir, nelfinavir, ritonavir and saquinavir. Use of protease inhibitors in tritherapy regimens permit more ambitious therapeutic strategies. Reverse transcriptase/ribonuclease H: RT can be inhibited either by nucleoside RT inhibitors (NRTIs) or by non nucleoside RT inhibitors (NNRTIs). NRTIs act as chain terminators, whereas NNRTIs inhibit DNA polymerization by binding a small hydrophobic pocket near the RT active site and inducing an allosteric change in this region. Classical NRTIs are abacavir, adefovir (PMEA), didanosine (ddI), lamivudine (3TC), stavudine (d4T), tenofovir (PMPA), zalcitabine (ddC), and zidovudine (AZT). Classical NNRTIs are atevirdine (BHAP U-87201E), delavirdine, efavirenz (DMP-266), emivirine (I-EBU), and nevirapine (BI-RG-587). The tritherapies used as a basic effective treatment of AIDS associate two NRTIs and one NNRTI. Mediates, with Gag polyprotein, the essential events in virion assembly, including binding the plasma membrane, making the protein-protein interactions necessary to create spherical particles, recruiting the viral Env proteins, and packaging the genomic RNA via direct interactions with the RNA packaging sequence (Psi). Gag-Pol polyprotein may regulate its own translation, by the binding genomic RNA in the 5'-UTR. At low concentration, the polyprotein would promote translation, whereas at high concentration, the polyprotein would encapsidate genomic RNA and then shut off translation. Functionally, targets the polyprotein to the plasma membrane via a multipartite membrane-binding signal, that includes its myristoylated N-terminus. Matrix protein is part of the pre-integration complex. Implicated in the release from host cell mediated by Vpu. Binds to RNA. Its function is as follows. Forms the conical core that encapsulates the genomic RNA-nucleocapsid complex in the virion. Most core are conical, with only 7% tubular. The core is constituted by capsid protein hexamer subunits. The core is disassembled soon after virion entry. Host restriction factors such as TRIM5-alpha or TRIMCyp bind retroviral capsids and cause premature capsid disassembly, leading to blocks in reverse transcription. Capsid restriction by TRIM5 is one of the factors which restricts HIV-1 to the human species. Host PIN1 apparently facilitates the virion uncoating. On the other hand, interactions with PDZD8 or CYPA stabilize the capsid. In terms of biological role, encapsulates and protects viral dimeric unspliced genomic RNA (gRNA). Binds these RNAs through its zinc fingers. Acts as a nucleic acid chaperone which is involved in rearangement of nucleic acid secondary structure during gRNA retrotranscription. Also facilitates template switch leading to recombination. As part of the polyprotein, participates in gRNA dimerization, packaging, tRNA incorporation and virion assembly. Aspartyl protease that mediates proteolytic cleavages of Gag and Gag-Pol polyproteins during or shortly after the release of the virion from the plasma membrane. Cleavages take place as an ordered, step-wise cascade to yield mature proteins. This process is called maturation. Displays maximal activity during the budding process just prior to particle release from the cell. Also cleaves Nef and Vif, probably concomitantly with viral structural proteins on maturation of virus particles. Hydrolyzes host EIF4GI and PABP1 in order to shut off the capped cellular mRNA translation. The resulting inhibition of cellular protein synthesis serves to ensure maximal viral gene expression and to evade host immune response. Also mediates cleavage of host YTHDF3. Mediates cleavage of host CARD8, thereby activating the CARD8 inflammasome, leading to the clearance of latent HIV-1 in patient CD4(+) T-cells after viral reactivation; in contrast, HIV-1 can evade CARD8-sensing when its protease remains inactive in infected cells prior to viral budding. Functionally, multifunctional enzyme that converts the viral RNA genome into dsDNA in the cytoplasm, shortly after virus entry into the cell. This enzyme displays a DNA polymerase activity that can copy either DNA or RNA templates, and a ribonuclease H (RNase H) activity that cleaves the RNA strand of RNA-DNA heteroduplexes in a partially processive 3' to 5' endonucleasic mode. Conversion of viral genomic RNA into dsDNA requires many steps. A tRNA(3)-Lys binds to the primer-binding site (PBS) situated at the 5'-end of the viral RNA. RT uses the 3' end of the tRNA primer to perform a short round of RNA-dependent minus-strand DNA synthesis. The reading proceeds through the U5 region and ends after the repeated (R) region which is present at both ends of viral RNA. The portion of the RNA-DNA heteroduplex is digested by the RNase H, resulting in a ssDNA product attached to the tRNA primer. This ssDNA/tRNA hybridizes with the identical R region situated at the 3' end of viral RNA. This template exchange, known as minus-strand DNA strong stop transfer, can be either intra- or intermolecular. RT uses the 3' end of this newly synthesized short ssDNA to perform the RNA-dependent minus-strand DNA synthesis of the whole template. RNase H digests the RNA template except for two polypurine tracts (PPTs) situated at the 5'-end and near the center of the genome. It is not clear if both polymerase and RNase H activities are simultaneous. RNase H probably can proceed both in a polymerase-dependent (RNA cut into small fragments by the same RT performing DNA synthesis) and a polymerase-independent mode (cleavage of remaining RNA fragments by free RTs). Secondly, RT performs DNA-directed plus-strand DNA synthesis using the PPTs that have not been removed by RNase H as primers. PPTs and tRNA primers are then removed by RNase H. The 3' and 5' ssDNA PBS regions hybridize to form a circular dsDNA intermediate. Strand displacement synthesis by RT to the PBS and PPT ends produces a blunt ended, linear dsDNA copy of the viral genome that includes long terminal repeats (LTRs) at both ends. Its function is as follows. Catalyzes viral DNA integration into the host chromosome, by performing a series of DNA cutting and joining reactions. This enzyme activity takes place after virion entry into a cell and reverse transcription of the RNA genome in dsDNA. The first step in the integration process is 3' processing. This step requires a complex comprising the viral genome, matrix protein, Vpr and integrase. This complex is called the pre-integration complex (PIC). The integrase protein removes 2 nucleotides from each 3' end of the viral DNA, leaving recessed CA OH's at the 3' ends. In the second step, the PIC enters cell nucleus. This process is mediated through integrase and Vpr proteins, and allows the virus to infect a non dividing cell. This ability to enter the nucleus is specific of lentiviruses, other retroviruses cannot and rely on cell division to access cell chromosomes. In the third step, termed strand transfer, the integrase protein joins the previously processed 3' ends to the 5' ends of strands of target cellular DNA at the site of integration. The 5'-ends are produced by integrase-catalyzed staggered cuts, 5 bp apart. A Y-shaped, gapped, recombination intermediate results, with the 5'-ends of the viral DNA strands and the 3' ends of target DNA strands remaining unjoined, flanking a gap of 5 bp. The last step is viral DNA integration into host chromosome. This involves host DNA repair synthesis in which the 5 bp gaps between the unjoined strands are filled in and then ligated. Since this process occurs at both cuts flanking the HIV genome, a 5 bp duplication of host DNA is produced at the ends of HIV-1 integration. Alternatively, Integrase may catalyze the excision of viral DNA just after strand transfer, this is termed disintegration. This is Gag-Pol polyprotein (gag-pol) from Human immunodeficiency virus type 1 group M subtype H (isolate VI991) (HIV-1).